A 1143-amino-acid chain; its full sequence is cGMP-specific 3',5'-cyclic phosphodiesterase (1143 aa).

2 stretches are compositionally biased toward low complexity: residues 1 to 19 (MHGP…DVSS) and 31 to 45 (TTSS…ASSS). The segment at 1–167 (MHGPVSRSSS…KASTTASQQD (167 aa)) is disordered. Polar residues predominate over residues 46-59 (KPLTNGANKTTIST). The span at 75 to 84 (GAIPASSSSG) shows a compositional bias: low complexity. Positions 96–107 (SNNNRPAATNRS) are enriched in polar residues. Positions 131 to 153 (SSSSPSQSPSQTQASIQTQTSQQ) are enriched in low complexity. 2 GAF domains span residues 272–424 (DIDV…GIGI) and 456–637 (NLEC…GLGI). In terms of domain architecture, PDEase spans 667–990 (SQDQTEKLTQ…RNWQDLAEKV (324 aa)). The Proton donor role is filled by His-743. A divalent metal cation contacts are provided by His-747, His-783, Asp-784, and Asp-894. 2 disordered regions span residues 1031-1060 (QQSQ…TGAL) and 1090-1143 (SHVS…CALL). Composition is skewed to basic and acidic residues over residues 1036–1047 (GSEDSHTPEHQR) and 1090–1100 (SHVSEDMDDKS). A compositionally biased stretch (low complexity) spans 1109 to 1127 (ASGSMGRMSASSSTSSTGG). Positions 1133 to 1143 (SKKRSKLCALL) are enriched in basic residues. Cys-1140 carries the post-translational modification Cysteine methyl ester. Cys-1140 carries the S-farnesyl cysteine lipid modification. The propeptide at 1141–1143 (ALL) is removed in mature form.

The protein belongs to the cyclic nucleotide phosphodiesterase family. As to quaternary structure, interacts with PrBP. It depends on a divalent metal cation as a cofactor.

Its subcellular location is the cell membrane. It carries out the reaction 3',5'-cyclic GMP + H2O = GMP + H(+). In terms of biological role, has a role regulating cGMP transport in Malpighian tubule principal cells. The chain is cGMP-specific 3',5'-cyclic phosphodiesterase from Drosophila simulans (Fruit fly).